Reading from the N-terminus, the 160-residue chain is Probable small nuclear ribonucleoprotein-associated protein B (160 aa).

The Sm domain maps to 4 to 86; it reads SKNNKMMAHL…IVSMTVDGPP (83 aa). A disordered region spans residues 80 to 160; the sequence is MTVDGPPPRD…YGGPPGGRPF (81 aa). Gly residues-rich tracts occupy residues 99-113, 128-143, and 150-160; these read GGAG…GGRG, APGG…GGPG, and GYGGPPGGRPF.

This sequence belongs to the snRNP SmB/SmN family.

Its subcellular location is the nucleus. The protein localises to the cytoplasm. It localises to the cytosol. Plays a role in pre-mRNA splicing as a core component of the spliceosomal U1, U2, U4 and U5 small nuclear ribonucleoproteins (snRNPs), the building blocks of the spliceosome. The sequence is that of Probable small nuclear ribonucleoprotein-associated protein B (snr-2) from Caenorhabditis elegans.